The following is a 134-amino-acid chain: ATP synthase epsilon chain (134 aa).

Belongs to the ATPase epsilon chain family. In terms of assembly, F-type ATPases have 2 components, CF(1) - the catalytic core - and CF(0) - the membrane proton channel. CF(1) has five subunits: alpha(3), beta(3), gamma(1), delta(1), epsilon(1). CF(0) has three main subunits: a, b and c.

It localises to the cell membrane. In terms of biological role, produces ATP from ADP in the presence of a proton gradient across the membrane. This Priestia megaterium (strain ATCC 12872 / QMB1551) (Bacillus megaterium) protein is ATP synthase epsilon chain (atpC).